A 77-amino-acid polypeptide reads, in one-letter code: Small ribosomal subunit protein bS18 (77 aa).

This sequence belongs to the bacterial ribosomal protein bS18 family. As to quaternary structure, part of the 30S ribosomal subunit. Forms a tight heterodimer with protein bS6.

Binds as a heterodimer with protein bS6 to the central domain of the 16S rRNA, where it helps stabilize the platform of the 30S subunit. This is Small ribosomal subunit protein bS18 from Lactobacillus helveticus (strain DPC 4571).